The chain runs to 317 residues: Annexin A13 (317 aa).

Residue Gly2 is the site of N-myristoyl glycine attachment. 4 Annexin repeats span residues 15–86 (FDAD…ALLD), 87–158 (RPNE…SLLQ), 170–242 (ELAG…TIVR), and 246–317 (DLEG…ALLH).

This sequence belongs to the annexin family. As to quaternary structure, monomer and homodimer. In terms of tissue distribution, detected on the tips of microvilli in small intestine (at protein level).

Its subcellular location is the apical cell membrane. The protein localises to the cell membrane. It is found in the cytoplasmic vesicle. Its function is as follows. Binds to membranes enriched in phosphatidylserine or phosphatidylglycerol in a calcium-dependent manner. Half-maximal membrane binding requires about 60 uM calcium. Does not bind to membranes that lack phospholipids with an acidic headgroup. In Mus musculus (Mouse), this protein is Annexin A13 (Anxa13).